Here is a 321-residue protein sequence, read N- to C-terminus: Proline-rich protein 2 (321 aa).

The signal sequence occupies residues 1–26; that stretch reads MRILPKSGGGALCLLFVFALCSVAHS. 24 consecutive repeat copies span residues 168 to 172, 173 to 176, 177 to 181, 185 to 189, 190 to 194, 198 to 202, 207 to 211, 212 to 217, 218 to 223, 225 to 229, 234 to 238, 240 to 244, 245 to 251, 252 to 256, 262 to 266, 267 to 271, 272 to 276, 277 to 281, 282 to 286, 288 to 292, 293 to 297, 298 to 302, 303 to 307, and 315 to 319. The 24 X 5 AA approximate repeats stretch occupies residues 168 to 319; that stretch reads PPLNLPPLTF…KFGKWPPFPS (152 aa).

It belongs to the plant proline-rich protein superfamily. As to expression, mostly expressed in aerial organs, particularly in expanding leaves, stems, flowers, and siliques.

It is found in the secreted. The protein localises to the cell wall. In Arabidopsis thaliana (Mouse-ear cress), this protein is Proline-rich protein 2 (PRP2).